A 284-amino-acid chain; its full sequence is GPN-loop GTPase 3 (284 aa).

G13–T18 provides a ligand contact to GTP. Residues G72–N74 carry the Gly-Pro-Asn (GPN)-loop; involved in dimer interface motif. T174 to D177 serves as a coordination point for GTP. The tract at residues E262–E284 is disordered.

Belongs to the GPN-loop GTPase family. As to quaternary structure, heterodimer with GPN1. Binds to RNA polymerase II (RNAPII). Interacts directly with subunits RPB4 and RPB7 and the CTD of RPB1.

In terms of biological role, small GTPase required for proper localization of RNA polymerase II (RNAPII). May act at an RNAP assembly step prior to nuclear import. In Mus musculus (Mouse), this protein is GPN-loop GTPase 3.